The chain runs to 531 residues: MTAPRQSTSATPDVAAAHDKILIVDFGSQVTQLIARRVREEGVYSEIVPFQKAEQAFTAMQPKAVILSGGPASVLEAGAPSAPMSIFTAGVPVLGICYGEQTMAQQLGGMVEGGHHREFGRAAIEITDDCALFEGVWKKGEQHDVWMSHGDRVTKLPEGFRGVARAAGSPIAIIADDTRKFYAMQFHPEVVHTPDGAKLIRNFVRKVAGLKGDWTMRAFREEAIEKIRAQVGQGRVICGLSGGVDSAVAAVLIHEAIGDQLTCVFVDHGLLRMAEAETVVSLFRDHYNIPLVHVDASKTFLGELAGVTDPELKRKTIGRLFIDVFDEEAKKIGGADFLAQGTLYPDVIESVSFTGGPSVTIKSHHNVGGLPARMKMKLVEPLRELFKDEVRALGRELGLPDVFVGRHPFPGPGLAIRCPGEITPEKLDILRQADAIYIEEIRRAGLYDTIWQAFAVLLPVKTVGVMGDGRTYEFVVGLRAVTSTDGMTADFYPFDMRFLGETATRIINEVKGVNRVVYDVTSKPPGTIEWE.

Residues 20 to 213 enclose the Glutamine amidotransferase type-1 domain; it reads KILIVDFGSQ…VRKVAGLKGD (194 aa). The Nucleophile role is filled by Cys-97. Catalysis depends on residues His-187 and Glu-189. The GMPS ATP-PPase domain maps to 214 to 406; that stretch reads WTMRAFREEA…LGLPDVFVGR (193 aa). 241–247 contributes to the ATP binding site; that stretch reads SGGVDSA.

As to quaternary structure, homodimer.

The catalysed reaction is XMP + L-glutamine + ATP + H2O = GMP + L-glutamate + AMP + diphosphate + 2 H(+). Its pathway is purine metabolism; GMP biosynthesis; GMP from XMP (L-Gln route): step 1/1. Catalyzes the synthesis of GMP from XMP. The chain is GMP synthase [glutamine-hydrolyzing] from Afipia carboxidovorans (strain ATCC 49405 / DSM 1227 / KCTC 32145 / OM5) (Oligotropha carboxidovorans).